We begin with the raw amino-acid sequence, 431 residues long: Glucose-1-phosphate adenylyltransferase (431 aa).

Residue K39 coordinates beta-D-fructose 1,6-bisphosphate. R40, H46, and R52 together coordinate AMP. An alpha-D-glucose 1-phosphate-binding site is contributed by Y114. R130 provides a ligand contact to AMP. Residues G179, 194 to 195, and S212 each bind alpha-D-glucose 1-phosphate; that span reads EK. AMP contacts are provided by E370 and R386. Beta-D-fructose 1,6-bisphosphate contacts are provided by residues 419–423 and 429–431; these read REMLR and QER.

Belongs to the bacterial/plant glucose-1-phosphate adenylyltransferase family. As to quaternary structure, homotetramer.

The enzyme catalyses alpha-D-glucose 1-phosphate + ATP + H(+) = ADP-alpha-D-glucose + diphosphate. It participates in glycan biosynthesis; glycogen biosynthesis. Its activity is regulated as follows. Allosterically activated by fructose-1,6-bisphosphate (F16BP) and inhibited by AMP. Involved in the biosynthesis of ADP-glucose, a building block required for the elongation reactions to produce glycogen. Catalyzes the reaction between ATP and alpha-D-glucose 1-phosphate (G1P) to produce pyrophosphate and ADP-Glc. This Shigella dysenteriae serotype 1 (strain Sd197) protein is Glucose-1-phosphate adenylyltransferase.